Consider the following 425-residue polypeptide: Glucan 1,3-beta-glucosidase (425 aa).

The first 17 residues, 1-17 (MLLTFAPIFLLISSIVA), serve as a signal peptide directing secretion. Catalysis depends on Glu-214, which acts as the Proton donor. Disulfide bonds link Cys-301/Cys-423 and Cys-326/Cys-352. Lys-328 serves as the catalytic Nucleophile.

This sequence belongs to the glycosyl hydrolase 5 (cellulase A) family.

The protein resides in the secreted. The catalysed reaction is Successive hydrolysis of beta-D-glucose units from the non-reducing ends of (1-&gt;3)-beta-D-glucans, releasing alpha-glucose.. Beta-glucanases participate in the metabolism of beta-glucan, the main structural component of the cell wall. It could also function biosynthetically as a transglycosylase. The polypeptide is Glucan 1,3-beta-glucosidase (EXG1) (Candida oleophila (Yeast)).